The primary structure comprises 54 residues: Putative collagen-like domain-containing protein 065L (54 aa).

The interval 1 to 54 (MRGLEAPGAVGPTGPSGAPGSQGPDGDVGGMGPEGPKGDDGPVGPKGPQGAAIF) is disordered. Residues 7-51 (PGAVGPTGPSGAPGSQGPDGDVGGMGPEGPKGDDGPVGPKGPQGA) form the Collagen-like domain. Gly residues predominate over residues 26–35 (GDVGGMGPEG). Low complexity predominate over residues 42–54 (PVGPKGPQGAAIF).

This Dryophytes versicolor (chameleon treefrog) protein is Putative collagen-like domain-containing protein 065L.